Consider the following 162-residue polypeptide: Large ribosomal subunit protein uL10 (162 aa).

This sequence belongs to the universal ribosomal protein uL10 family. Part of the ribosomal stalk of the 50S ribosomal subunit. The N-terminus interacts with L11 and the large rRNA to form the base of the stalk. The C-terminus forms an elongated spine to which L12 dimers bind in a sequential fashion forming a multimeric L10(L12)X complex.

Its function is as follows. Forms part of the ribosomal stalk, playing a central role in the interaction of the ribosome with GTP-bound translation factors. In Mycoplasma genitalium (strain ATCC 33530 / DSM 19775 / NCTC 10195 / G37) (Mycoplasmoides genitalium), this protein is Large ribosomal subunit protein uL10 (rplJ).